The chain runs to 205 residues: Holliday junction branch migration complex subunit RuvA (205 aa).

Residues 1 to 64 (MIGKLKGSIE…EDQLKLFGFV (64 aa)) are domain I. The interval 65–143 (SALEREWFNL…AFAGDASASI (79 aa)) is domain II. The interval 144-153 (GLKQELGEGV) is flexible linker. The tract at residues 153–205 (VASAPVADAVSALTNLGYSRDQAANAVAAALKNGGEGGDSAKLIRLGLKELSR) is domain III.

This sequence belongs to the RuvA family. In terms of assembly, homotetramer. Forms an RuvA(8)-RuvB(12)-Holliday junction (HJ) complex. HJ DNA is sandwiched between 2 RuvA tetramers; dsDNA enters through RuvA and exits via RuvB. An RuvB hexamer assembles on each DNA strand where it exits the tetramer. Each RuvB hexamer is contacted by two RuvA subunits (via domain III) on 2 adjacent RuvB subunits; this complex drives branch migration. In the full resolvosome a probable DNA-RuvA(4)-RuvB(12)-RuvC(2) complex forms which resolves the HJ.

It localises to the cytoplasm. Its function is as follows. The RuvA-RuvB-RuvC complex processes Holliday junction (HJ) DNA during genetic recombination and DNA repair, while the RuvA-RuvB complex plays an important role in the rescue of blocked DNA replication forks via replication fork reversal (RFR). RuvA specifically binds to HJ cruciform DNA, conferring on it an open structure. The RuvB hexamer acts as an ATP-dependent pump, pulling dsDNA into and through the RuvAB complex. HJ branch migration allows RuvC to scan DNA until it finds its consensus sequence, where it cleaves and resolves the cruciform DNA. The sequence is that of Holliday junction branch migration complex subunit RuvA from Agrobacterium fabrum (strain C58 / ATCC 33970) (Agrobacterium tumefaciens (strain C58)).